Here is a 123-residue protein sequence, read N- to C-terminus: Large ribosomal subunit protein uL18 (123 aa).

This sequence belongs to the universal ribosomal protein uL18 family. Part of the 50S ribosomal subunit; part of the 5S rRNA/L5/L18/L25 subcomplex. Contacts the 5S and 23S rRNAs.

Functionally, this is one of the proteins that bind and probably mediate the attachment of the 5S RNA into the large ribosomal subunit, where it forms part of the central protuberance. The polypeptide is Large ribosomal subunit protein uL18 (Wolbachia sp. subsp. Brugia malayi (strain TRS)).